We begin with the raw amino-acid sequence, 332 residues long: 5-dehydro-2-deoxygluconokinase 2 (332 aa).

Belongs to the carbohydrate kinase PfkB family.

The enzyme catalyses 5-dehydro-2-deoxy-D-gluconate + ATP = 6-phospho-5-dehydro-2-deoxy-D-gluconate + ADP + H(+). Its pathway is polyol metabolism; myo-inositol degradation into acetyl-CoA; acetyl-CoA from myo-inositol: step 5/7. Functionally, catalyzes the phosphorylation of 5-dehydro-2-deoxy-D-gluconate (2-deoxy-5-keto-D-gluconate or DKG) to 6-phospho-5-dehydro-2-deoxy-D-gluconate (DKGP). This Bacillus cereus (strain ZK / E33L) protein is 5-dehydro-2-deoxygluconokinase 2.